The chain runs to 221 residues: Ribosomal RNA large subunit methyltransferase E (221 aa).

5 residues coordinate S-adenosyl-L-methionine: Gly60, Trp62, Asp89, Asp105, and Asp134. The active-site Proton acceptor is the Lys174. The disordered stretch occupies residues 199 to 221; it reads KPKASRDKSSETFLLGRQLKHPG.

The protein belongs to the class I-like SAM-binding methyltransferase superfamily. RNA methyltransferase RlmE family.

It is found in the cytoplasm. It carries out the reaction uridine(2552) in 23S rRNA + S-adenosyl-L-methionine = 2'-O-methyluridine(2552) in 23S rRNA + S-adenosyl-L-homocysteine + H(+). Specifically methylates the uridine in position 2552 of 23S rRNA at the 2'-O position of the ribose in the fully assembled 50S ribosomal subunit. The chain is Ribosomal RNA large subunit methyltransferase E from Ralstonia pickettii (strain 12J).